A 333-amino-acid polypeptide reads, in one-letter code: MLRVFIFFVFLGSGLTGRIKPQITCKYFISENNTWYKYNVTILNSTIVLPAYNTIPSNAAGISCTCHDIDYLQKNNISIHYNTSILKTFQDIRIIRCGMKNISEIAGGFGKELKFLDLRYNDLQVIEYNILRKLIRSNTPTYLYYNNLMCGKRNCPLYYFLLKQEQTYLKLLPQFFLRRINFSNNNTYLYHFLSCGNKPGHEFLEYQTKYCRTKFPEINITVNQLTAKKNTERYKSCYPLVFISILCSCISFLFLFICLLRSICKKYSCTKQGKSGHNSGHNYIPLIPSYTFSLKKHRHPETAVVEDHTTSANSPIVYIPTTEEKKVSCSRRK.

The first 31 residues, 1-31 (MLRVFIFFVFLGSGLTGRIKPQITCKYFISE), serve as a signal peptide directing secretion. Residues Asn32, Asn39, Asn44, Asn76, Asn82, and Asn101 are each glycosylated (N-linked (GlcNAc...) asparagine; by host). The Extracellular portion of the chain corresponds to 32–239 (NNTWYKYNVT…NTERYKSCYP (208 aa)). The LRR repeat unit spans residues 112 to 133 (ELKFLDLRYNDLQVIEYNILRK). N-linked (GlcNAc...) asparagine; by host glycosylation is found at Asn181, Asn185, and Asn219. Cys195 and Cys237 form a disulfide bridge. A helical transmembrane segment spans residues 240–260 (LVFISILCSCISFLFLFICLL). Residues 261-333 (RSICKKYSCT…EKKVSCSRRK (73 aa)) are Cytoplasmic-facing.

It belongs to the asfivirus I329L family. In terms of processing, highly glycosylated.

It is found in the host endoplasmic reticulum membrane. It localises to the host Golgi apparatus membrane. Functionally, viral TLR3 homolog that probably prevents TLR3 dimerization and subsequent induction of IFN. Inhibits dsRNA-stimulated activation of NF-kB and IRF3. The chain is Transmembrane protein I329L from Ornithodoros (relapsing fever ticks).